The following is a 493-amino-acid chain: Alpha-amylase-related protein (493 aa).

The first 19 residues, 1–19 (MFKFATAVILCLAASSTLA), serve as a signal peptide directing secretion. Residue glutamine 20 is modified to Pyrrolidone carboxylic acid. An intrachain disulfide couples cysteine 47 to cysteine 103. Residues asparagine 117, glutamine 168, and aspartate 177 each coordinate Ca(2+). The cysteines at positions 156 and 170 are disulfide-linked. Residue arginine 205 coordinates chloride. Aspartate 207 acts as the Nucleophile in catalysis. Position 211 (histidine 211) interacts with Ca(2+). Glutamate 244 (proton donor) is an active-site residue. Asparagine 307 and arginine 342 together coordinate chloride. Disulfide bonds link cysteine 375–cysteine 381, cysteine 417–cysteine 440, and cysteine 447–cysteine 459.

The protein belongs to the glycosyl hydrolase 13 family. Monomer. The cofactor is Ca(2+). Requires chloride as cofactor.

The protein localises to the secreted. The catalysed reaction is Endohydrolysis of (1-&gt;4)-alpha-D-glucosidic linkages in polysaccharides containing three or more (1-&gt;4)-alpha-linked D-glucose units.. This chain is Alpha-amylase-related protein (Amyrel), found in Drosophila ananassae (Fruit fly).